The chain runs to 509 residues: ATP synthase subunit alpha (509 aa).

Residue 169–176 (GDRQTGKT) coordinates ATP.

Belongs to the ATPase alpha/beta chains family. In terms of assembly, F-type ATPases have 2 components, CF(1) - the catalytic core - and CF(0) - the membrane proton channel. CF(1) has five subunits: alpha(3), beta(3), gamma(1), delta(1), epsilon(1). CF(0) has three main subunits: a(1), b(2) and c(9-12). The alpha and beta chains form an alternating ring which encloses part of the gamma chain. CF(1) is attached to CF(0) by a central stalk formed by the gamma and epsilon chains, while a peripheral stalk is formed by the delta and b chains.

The protein resides in the cell inner membrane. It catalyses the reaction ATP + H2O + 4 H(+)(in) = ADP + phosphate + 5 H(+)(out). Its function is as follows. Produces ATP from ADP in the presence of a proton gradient across the membrane. The alpha chain is a regulatory subunit. The polypeptide is ATP synthase subunit alpha (Agrobacterium fabrum (strain C58 / ATCC 33970) (Agrobacterium tumefaciens (strain C58))).